Consider the following 328-residue polypeptide: D-cysteine desulfhydrase (328 aa).

Lys-51 carries the N6-(pyridoxal phosphate)lysine modification.

This sequence belongs to the ACC deaminase/D-cysteine desulfhydrase family. As to quaternary structure, homodimer. Pyridoxal 5'-phosphate serves as cofactor.

It catalyses the reaction D-cysteine + H2O = hydrogen sulfide + pyruvate + NH4(+) + H(+). In terms of biological role, catalyzes the alpha,beta-elimination reaction of D-cysteine and of several D-cysteine derivatives. It could be a defense mechanism against D-cysteine. This is D-cysteine desulfhydrase from Salmonella paratyphi B (strain ATCC BAA-1250 / SPB7).